Reading from the N-terminus, the 114-residue chain is Class I hydrophobin 6 (114 aa).

The signal sequence occupies residues 1–19; it reads MLFKQLILVATALTTLAVA. Disulfide bonds link C33/C93, C40/C87, C41/C74, and C94/C107. An N-linked (GlcNAc...) asparagine glycan is attached at N42.

The protein belongs to the fungal hydrophobin family. As to quaternary structure, self-assembles to form functional amyloid fibrils called rodlets. Self-assembly into fibrillar rodlets occurs spontaneously at hydrophobic:hydrophilic interfaces and the rodlets further associate laterally to form amphipathic monolayers.

It localises to the secreted. It is found in the cell wall. Aerial growth, conidiation, and dispersal of filamentous fungi in the environment rely upon a capability of their secreting small amphipathic proteins called hydrophobins (HPBs) with low sequence identity. Class I can self-assemble into an outermost layer of rodlet bundles on aerial cell surfaces, conferring cellular hydrophobicity that supports fungal growth, development and dispersal; whereas Class II form highly ordered films at water-air interfaces through intermolecular interactions but contribute nothing to the rodlet structure. In Pleurotus ostreatus (strain PC15) (Oyster mushroom), this protein is Class I hydrophobin 6.